Here is a 122-residue protein sequence, read N- to C-terminus: Large ribosomal subunit protein uL18 (122 aa).

This sequence belongs to the universal ribosomal protein uL18 family. In terms of assembly, part of the 50S ribosomal subunit; part of the 5S rRNA/L5/L18/L25 subcomplex. Contacts the 5S and 23S rRNAs.

Its function is as follows. This is one of the proteins that bind and probably mediate the attachment of the 5S RNA into the large ribosomal subunit, where it forms part of the central protuberance. The chain is Large ribosomal subunit protein uL18 from Leptospira interrogans serogroup Icterohaemorrhagiae serovar copenhageni (strain Fiocruz L1-130).